A 1417-amino-acid chain; its full sequence is DNA-directed RNA polymerase subunit beta' (1417 aa).

Zn(2+)-binding residues include Cys68, Cys70, Cys83, and Cys86. Residues Asp458, Asp460, and Asp462 each contribute to the Mg(2+) site. The Zn(2+) site is built by Cys811, Cys884, Cys891, and Cys894.

The protein belongs to the RNA polymerase beta' chain family. In terms of assembly, the RNAP catalytic core consists of 2 alpha, 1 beta, 1 beta' and 1 omega subunit. When a sigma factor is associated with the core the holoenzyme is formed, which can initiate transcription. Mg(2+) serves as cofactor. Zn(2+) is required as a cofactor.

The enzyme catalyses RNA(n) + a ribonucleoside 5'-triphosphate = RNA(n+1) + diphosphate. DNA-dependent RNA polymerase catalyzes the transcription of DNA into RNA using the four ribonucleoside triphosphates as substrates. In Francisella tularensis subsp. mediasiatica (strain FSC147), this protein is DNA-directed RNA polymerase subunit beta'.